The chain runs to 927 residues: Solute carrier family 12 protein B0303.11 (927 aa).

Over 1–23 the chain is Cytoplasmic; that stretch reads MPSSTASSEDAPITSTAWMNWKD. A helical transmembrane segment spans residues 24–44; sequence VFLKCVQPMLAVVLLLRFSSI. At 45–53 the chain is on the extracellular side; sequence VDEAGFTTT. A helical membrane pass occupies residues 54–74; that stretch reads IILVFFTFLVSLVTGWSACTV. Residues 75–95 lie on the Cytoplasmic side of the membrane; it reads VSRKSSEVGFVKTMLAYSSTE. The helical transmembrane segment at 96 to 116 threads the bilayer; the sequence is FAISFSIIYLFCLLVATSTFL. Topologically, residues 117–141 are extracellular; it reads TSAAEAVLHIFSTFSLELLDGATHD. The helical transmembrane segment at 142–159 threads the bilayer; the sequence is LRLVSSVLSLITLALCMV. The Cytoplasmic portion of the chain corresponds to 160-165; that stretch reads RNRNAR. Residues 166–186 form a helical membrane-spanning segment; that stretch reads FVRTFIFALTCIAIALQLSSV. The Extracellular portion of the chain corresponds to 187 to 212; sequence MFRYGEYQLRRVSDRNAMIPSPPNEE. The helical transmembrane segment at 213–233 threads the bilayer; sequence ISTIFAQLFPAAMCGLTILNI. The Cytoplasmic portion of the chain corresponds to 234-244; the sequence is GSKLQNTAPRG. A helical membrane pass occupies residues 245–265; that stretch reads ALIAIAVSACFYGAAAMLDYV. Over 266–284 the chain is Extracellular; sequence EFFARTSTSNSTGSAEYNE. N-linked (GlcNAc...) asparagine glycosylation occurs at asparagine 275. Residues 285–305 traverse the membrane as a helical segment; that stretch reads FLSYIYTTVPMAIVITLACVL. Residues 306-345 are Cytoplasmic-facing; sequence SAVSTLKYAAVILQSLGRSNQCRCILWLAKGFGERDIPIR. Residues 346–366 form a helical membrane-spanning segment; it reads CLLLLSTVQILVSAIGSYDIL. Residue cysteine 367 is a topological domain, extracellular. The chain crosses the membrane as a helical span at residues 368–388; it reads IPTTVFYLFAYALFNFYVFLV. The Cytoplasmic portion of the chain corresponds to 389-394; that stretch reads KLSDPE. A helical transmembrane segment spans residues 395–415; that stretch reads IPSPPTLLSLAISAACFIASL. Residues 416–419 are Extracellular-facing; that stretch reads YTNR. The helical transmembrane segment at 420 to 440 threads the bilayer; it reads HLALFIASIFAISYCSLLYII. The Cytoplasmic segment spans residues 441–927; sequence RRERNEDGEE…SMSALRLKFP (487 aa).

Belongs to the SLC12A transporter family.

The protein localises to the cell membrane. The protein is Solute carrier family 12 protein B0303.11 of Caenorhabditis elegans.